Reading from the N-terminus, the 396-residue chain is Elongation factor Tu (396 aa).

Positions 10 to 206 constitute a tr-type G domain; sequence KPHVNVGTIG…AMDEYIPTPE (197 aa). Residues 19–26 are G1; it reads GHVDHGKT. A GTP-binding site is contributed by 19-26; sequence GHVDHGKT. Thr26 contacts Mg(2+). The segment at 60 to 64 is G2; the sequence is GITIA. The interval 81-84 is G3; it reads DCPG. GTP contacts are provided by residues 81 to 85 and 136 to 139; these read DCPGH and NKAD. Residues 136–139 are G4; the sequence is NKAD. A G5 region spans residues 174 to 176; the sequence is SAL.

The protein belongs to the TRAFAC class translation factor GTPase superfamily. Classic translation factor GTPase family. EF-Tu/EF-1A subfamily. Monomer.

Its subcellular location is the cytoplasm. The catalysed reaction is GTP + H2O = GDP + phosphate + H(+). GTP hydrolase that promotes the GTP-dependent binding of aminoacyl-tRNA to the A-site of ribosomes during protein biosynthesis. The polypeptide is Elongation factor Tu (Alkalilimnicola ehrlichii (strain ATCC BAA-1101 / DSM 17681 / MLHE-1)).